A 163-amino-acid chain; its full sequence is MLNHFNFKLKRDVTIIVPGEAFVSNKRVISTILGSCVAVVLCDESNNLIGMNHYVLVKSDLDISPDQRGRYGIYAIPMLINAMLENGASKSNLKAKLFGGTNFMAKGSVKVGLENSEFAVNTLNKYRIPILAKDFDQSKSRKIFAFPENFKVIVEYPDGTKVF.

It belongs to the CheD family.

The catalysed reaction is L-glutaminyl-[protein] + H2O = L-glutamyl-[protein] + NH4(+). Its function is as follows. Probably deamidates glutamine residues to glutamate on methyl-accepting chemotaxis receptors (MCPs), playing an important role in chemotaxis. This chain is Probable chemoreceptor glutamine deamidase CheD, found in Borreliella burgdorferi (strain ATCC 35210 / DSM 4680 / CIP 102532 / B31) (Borrelia burgdorferi).